Here is a 219-residue protein sequence, read N- to C-terminus: UPF0376 protein C36C5.12 (219 aa).

At 1-20 the chain is on the cytoplasmic side; sequence MGRLDVKNSWIEFHQDEMTS. The helical; Signal-anchor for type II membrane protein transmembrane segment at 21–43 threads the bilayer; the sequence is FLKLAIIGTVLLGVAHGANLTAA. Over 44-219 the chain is Extracellular; it reads EKETYCELRS…VSKCDFSRLG (176 aa). N-linked (GlcNAc...) asparagine glycosylation is found at asparagine 104 and asparagine 204.

This sequence belongs to the UPF0376 family.

It is found in the membrane. The chain is UPF0376 protein C36C5.12 from Caenorhabditis elegans.